A 1031-amino-acid chain; its full sequence is LRR receptor-like serine/threonine-protein kinase EFR (1031 aa).

A signal peptide spans 1-24; it reads MKLSFSLVFNALTLLLQVCIFAQA. Residues 25 to 653 lie on the Extracellular side of the membrane; sequence RFSNETDMQA…LSVRKKVVSG (629 aa). N-linked (GlcNAc...) asparagine glycosylation is found at Asn-28, Asn-55, and Asn-95. LRR repeat units lie at residues 98 to 120, 122 to 144, 146 to 168, 170 to 193, 194 to 216, 218 to 240, 242 to 264, 267 to 289, 291 to 312, and 315 to 335; these read FLRL…VGRL, RLQY…LSNC, RLST…LGSL, KLAI…GNLT, SLQK…VARL, QMVF…LYNI, SLES…FGYL, NLRR…LANI, SLER…SFGK, and NLWW…SGLE. N-linked (GlcNAc...) asparagine glycosylation is found at Asn-127 and Asn-143. N-linked (GlcNAc...) asparagine glycans are attached at residues Asn-180 and Asn-191. An N-linked (GlcNAc...) asparagine glycan is attached at Asn-239. Asn-288 is a glycosylation site (N-linked (GlcNAc...) asparagine). N-linked (GlcNAc...) asparagine glycans are attached at residues Asn-323, Asn-329, Asn-342, and Asn-366. 11 LRR repeats span residues 345 to 368, 370 to 392, 394 to 416, 418 to 440, 442 to 464, 466 to 487, 490 to 512, 514 to 536, 538 to 560, 561 to 584, and 585 to 597; these read QLEY…ANLS, TLTS…IGNL, SLQE…FGKL, NLQV…FGNM, RLQK…LGRC, YLLD…EILQ, SLAY…VGKL, LLVG…IGGC, SMEF…SRLV, SLKN…ASLP, and SLRN…NKFE. A glycan (N-linked (GlcNAc...) asparagine) is linked at Asn-439. Asn-478 is a glycosylation site (N-linked (GlcNAc...) asparagine). N-linked (GlcNAc...) asparagine glycosylation is found at Asn-571, Asn-590, and Asn-608. The chain crosses the membrane as a helical span at residues 654-674; that stretch reads ICIGIASLLLIIIVASLCWFM. Residues 675 to 1031 lie on the Cytoplasmic side of the membrane; the sequence is KRKKKNNASD…WMLNTDMHTM (357 aa). Thr-709 is subject to Phosphothreonine. The Protein kinase domain maps to 712 to 1001; it reads FSSTNLIGSG…ELISIRSKFF (290 aa). Residues 718-726 and Lys-741 contribute to the ATP site; that span reads IGSGNFGNV. 2 positions are modified to phosphotyrosine: Tyr-791 and Tyr-836. Asp-849 functions as the Proton acceptor in the catalytic mechanism. Tyr-897 bears the Phosphotyrosine mark. Over residues 1005–1020 the composition is skewed to polar residues; the sequence is TTITESPRDAPQSSPQ. The segment at 1005–1031 is disordered; that stretch reads TTITESPRDAPQSSPQEWMLNTDMHTM.

It belongs to the protein kinase superfamily. Ser/Thr protein kinase family. In terms of assembly, binds to Pseudomonas syringae AvrPto1 and (via the kinase and cytoplasmic domains) to hopD2. Interacts with SERK3/BAK1, SERK4/BKK1, SERK1 and SERK2 in a specific ligand-induced manner. Binds to IOS1. Binds to BIK1 in the absence of pathogen elicitor; dissociates upon pathogen-associated molecular pattern (PAMP)-triggered activation. Autophosphorylated after elicitation with elfl18. Autophosphorylation is inhibited by the binding with avrPto1. Phosphorylation at T-836 is required for immune signaling. Post-translationally, polyubiquitinated at the kinase domain mediated by P.syringae AvrPtoB.

It is found in the cell membrane. The protein resides in the endomembrane system. It catalyses the reaction L-seryl-[protein] + ATP = O-phospho-L-seryl-[protein] + ADP + H(+). The catalysed reaction is L-threonyl-[protein] + ATP = O-phospho-L-threonyl-[protein] + ADP + H(+). Functionally, constitutes the pattern-recognition receptor (PPR) that determines the specific perception of elongation factor Tu (EF-Tu), a potent elicitor of the defense response to pathogen-associated molecular patterns (PAMPs); phosphorylates BIK1 upon elicitation to regulate immune responses such as defense hormone expression (e.g. jasmonic acid (JA) and salicylic acid (SA)). Reduces transformation by Rhizobium radiobacter probably by inducing plant defense during the interaction. Binding to the effector AvrPto1 from P.syringae blocks the downstream plant immune response while interaction with hopD2 decreases the phosphorylation level of EFR upon elf18 treatment. Specific endoplasmic reticulum quality control components (ERD2B, CRT3, UGGT and STT3A) are required for the biogenesis of EFR. This Arabidopsis thaliana (Mouse-ear cress) protein is LRR receptor-like serine/threonine-protein kinase EFR.